A 550-amino-acid polypeptide reads, in one-letter code: Zinc finger protein squeeze (550 aa).

Residues 73 to 105 are compositionally biased toward low complexity; the sequence is QQQQQQQQQEMLQQQQQHQAHQEQQQQQQQQQQ. Residues 73 to 179 are disordered; it reads QQQQQQQQQE…GGGGGDGDQS (107 aa). Over residues 106–117 the composition is skewed to basic residues; it reads QHHHQQQQHHLK. Residues 141 to 156 are compositionally biased toward polar residues; that stretch reads RSPQRPLMSSGSNASS. Residues 164–176 are compositionally biased toward gly residues; that stretch reads SGGGPGGGGGGDG. 5 C2H2-type zinc fingers span residues 182-204, 210-232, 238-262, 268-290, and 299-321; these read YKCA…TRIH, YRCE…IRTH, YKCR…SRCH, FKCN…IPKH, and HICN…LQKH. The disordered stretch occupies residues 399–485; the sequence is LQQHQQQQQQ…VPPSHLQQHR (87 aa). Residues 400 to 416 show a composition bias toward low complexity; the sequence is QQHQQQQQQQQQDMLQQ. Residue threonine 424 is modified to Phosphothreonine. A phosphoserine mark is found at serine 428 and serine 430. Over residues 444-460 the composition is skewed to low complexity; the sequence is QTTPQHHLQQQQQQQQP. Residues tyrosine 494 and tyrosine 496 each carry the phosphotyrosine modification.

It belongs to the krueppel C2H2-type zinc-finger protein family. Interacts with nab; which acts as a coactivator. Interacts with ap.

Its subcellular location is the nucleus. Transcription factor involved in neuronal fate specification. First required in embryonic CNS development to define the number of cells that express apterous (ap) in the ap thoracic cluster of interneurons. Later on, it plays a central role in the combinatorial code of transcription factors that specifies the fate of the Tv neuron in the ap cluster by participating in the transcription regulation of FMRFa in Tv cells. Also required for projection neuron dendritic targeting. The polypeptide is Zinc finger protein squeeze (sqz) (Drosophila pseudoobscura pseudoobscura (Fruit fly)).